Here is a 226-residue protein sequence, read N- to C-terminus: Ras-related protein RABA4a (226 aa).

T2 carries the N-acetylthreonine modification. 24-31 (GDSAVGKS) is a binding site for GTP. The Effector region motif lies at 46–54 (SKATIGVEF). GTP contacts are provided by residues 72–76 (DTAGQ), 130–133 (NKSD), and 160–161 (SA). Residues 189-226 (ASEDQENGNPGSLAGKKIDIVPGPGQVIPNKSNMCCNS) are disordered. Residues 217–226 (PNKSNMCCNS) are compositionally biased toward polar residues. 2 S-geranylgeranyl cysteine lipidation sites follow: C223 and C224.

The protein belongs to the small GTPase superfamily. Rab family. Interacts with TCTP1.

The protein localises to the cell membrane. Intracellular vesicle trafficking and protein transport. The polypeptide is Ras-related protein RABA4a (Arabidopsis thaliana (Mouse-ear cress)).